Consider the following 226-residue polypeptide: Ribonuclease 3 (226 aa).

The region spanning 6-128 (INRLQRKLGY…LIGAIFLDSD (123 aa)) is the RNase III domain. E41 is a Mg(2+) binding site. The active site involves D45. The Mg(2+) site is built by D114 and E117. The active site involves E117. One can recognise a DRBM domain in the interval 155–225 (DPKTRLQEYL…AEQALKQLEL (71 aa)).

The protein belongs to the ribonuclease III family. As to quaternary structure, homodimer. Mg(2+) is required as a cofactor.

The protein localises to the cytoplasm. It carries out the reaction Endonucleolytic cleavage to 5'-phosphomonoester.. Functionally, digests double-stranded RNA. Involved in the processing of primary rRNA transcript to yield the immediate precursors to the large and small rRNAs (23S and 16S). Processes some mRNAs, and tRNAs when they are encoded in the rRNA operon. Processes pre-crRNA and tracrRNA of type II CRISPR loci if present in the organism. In Photorhabdus laumondii subsp. laumondii (strain DSM 15139 / CIP 105565 / TT01) (Photorhabdus luminescens subsp. laumondii), this protein is Ribonuclease 3.